A 197-amino-acid chain; its full sequence is Glycerol-3-phosphate acyltransferase (197 aa).

A run of 5 helical transmembrane segments spans residues 1-21 (MNILIIFASYLLGSLPTGFLI), 78-98 (LIEVIAGISAISGHIWPIWLG), 111-131 (MFLALSWKVGLASLGIFLIVL), 136-155 (FVSLSSISAAILLPIFMFFY), and 159-176 (FIHTYFFISLIVALLVIW).

Belongs to the PlsY family. Probably interacts with PlsX.

It localises to the cell inner membrane. It carries out the reaction an acyl phosphate + sn-glycerol 3-phosphate = a 1-acyl-sn-glycero-3-phosphate + phosphate. Its pathway is lipid metabolism; phospholipid metabolism. Its function is as follows. Catalyzes the transfer of an acyl group from acyl-phosphate (acyl-PO(4)) to glycerol-3-phosphate (G3P) to form lysophosphatidic acid (LPA). This enzyme utilizes acyl-phosphate as fatty acyl donor, but not acyl-CoA or acyl-ACP. The protein is Glycerol-3-phosphate acyltransferase of Prochlorococcus marinus (strain MIT 9215).